A 329-amino-acid polypeptide reads, in one-letter code: Ketol-acid reductoisomerase (NADP(+)) (329 aa).

Positions 2-182 (VEIYYDDDAS…GGTRAGALRT (181 aa)) constitute a KARI N-terminal Rossmann domain. Residues 25-28 (YGSQ), serine 51, and serine 53 each bind NADP(+). The active site involves histidine 108. Glycine 134 lines the NADP(+) pocket. The 146-residue stretch at 183 to 328 (TFTEETETDL…AKLRPMMSWI (146 aa)) folds into the KARI C-terminal knotted domain. Mg(2+)-binding residues include aspartate 191, glutamate 195, glutamate 227, and glutamate 231. Serine 252 serves as a coordination point for substrate.

It belongs to the ketol-acid reductoisomerase family. Requires Mg(2+) as cofactor.

It carries out the reaction (2R)-2,3-dihydroxy-3-methylbutanoate + NADP(+) = (2S)-2-acetolactate + NADPH + H(+). The enzyme catalyses (2R,3R)-2,3-dihydroxy-3-methylpentanoate + NADP(+) = (S)-2-ethyl-2-hydroxy-3-oxobutanoate + NADPH + H(+). It participates in amino-acid biosynthesis; L-isoleucine biosynthesis; L-isoleucine from 2-oxobutanoate: step 2/4. It functions in the pathway amino-acid biosynthesis; L-valine biosynthesis; L-valine from pyruvate: step 2/4. Functionally, involved in the biosynthesis of branched-chain amino acids (BCAA). Catalyzes an alkyl-migration followed by a ketol-acid reduction of (S)-2-acetolactate (S2AL) to yield (R)-2,3-dihydroxy-isovalerate. In the isomerase reaction, S2AL is rearranged via a Mg-dependent methyl migration to produce 3-hydroxy-3-methyl-2-ketobutyrate (HMKB). In the reductase reaction, this 2-ketoacid undergoes a metal-dependent reduction by NADPH to yield (R)-2,3-dihydroxy-isovalerate. The polypeptide is Ketol-acid reductoisomerase (NADP(+)) (Frankia casuarinae (strain DSM 45818 / CECT 9043 / HFP020203 / CcI3)).